A 756-amino-acid chain; its full sequence is NUT family member 2F (756 aa).

Disordered stretches follow at residues 173–200 (GNARPWPQGAHGEGSLAPSQAKARPDDS), 293–438 (IQKS…TSDP), 511–639 (RAAP…LPGM), and 653–756 (RLSQ…HCSQ). Over residues 304–321 (SLPPPAPPRLEPRGPPAP) the composition is skewed to pro residues. A compositionally biased stretch (basic and acidic residues) spans 417-427 (EGQREKGKVEQ). Polar residues predominate over residues 543–560 (QRVSVETSPPQTAAQDPQ). Low complexity predominate over residues 654-665 (LSQSPVPSSGLL). Residues 746–756 (SRRKKKRHCSQ) show a composition bias toward basic residues.

The protein belongs to the NUT family.

This chain is NUT family member 2F (NUTM2F), found in Homo sapiens (Human).